We begin with the raw amino-acid sequence, 262 residues long: Ribosomal RNA small subunit methyltransferase A (262 aa).

The S-adenosyl-L-methionine site is built by isoleucine 18, glycine 43, glutamate 65, aspartate 91, and asparagine 110.

This sequence belongs to the class I-like SAM-binding methyltransferase superfamily. rRNA adenine N(6)-methyltransferase family. RsmA subfamily.

It localises to the cytoplasm. It carries out the reaction adenosine(1518)/adenosine(1519) in 16S rRNA + 4 S-adenosyl-L-methionine = N(6)-dimethyladenosine(1518)/N(6)-dimethyladenosine(1519) in 16S rRNA + 4 S-adenosyl-L-homocysteine + 4 H(+). Functionally, specifically dimethylates two adjacent adenosines (A1518 and A1519) in the loop of a conserved hairpin near the 3'-end of 16S rRNA in the 30S particle. May play a critical role in biogenesis of 30S subunits. In Ehrlichia canis (strain Jake), this protein is Ribosomal RNA small subunit methyltransferase A.